The chain runs to 854 residues: DNA mismatch repair protein MutS (854 aa).

Residue 616 to 623 (GPNMGGKS) participates in ATP binding.

It belongs to the DNA mismatch repair MutS family.

Its function is as follows. This protein is involved in the repair of mismatches in DNA. It is possible that it carries out the mismatch recognition step. This protein has a weak ATPase activity. The protein is DNA mismatch repair protein MutS of Pectobacterium atrosepticum (strain SCRI 1043 / ATCC BAA-672) (Erwinia carotovora subsp. atroseptica).